A 218-amino-acid chain; its full sequence is NAD(P)H-quinone oxidoreductase subunit I (218 aa).

2 4Fe-4S ferredoxin-type domains span residues 55 to 84 and 95 to 124; these read GRIHYEFDKCIACEVCVRVCPINLPVVDWV and RNYSIDFGACIFCGNCVEYCPTNCLSMTEE. [4Fe-4S] cluster contacts are provided by Cys64, Cys67, Cys70, Cys74, Cys104, Cys107, Cys110, and Cys114. Positions 179–218 are disordered; that stretch reads LRAGKLPSQIIKELQADKSEEEGKNNSSDMVPNKLNSTNK. A compositionally biased stretch (basic and acidic residues) spans 192 to 202; sequence LQADKSEEEGK. Polar residues predominate over residues 203-218; sequence NNSSDMVPNKLNSTNK.

The protein belongs to the complex I 23 kDa subunit family. NDH-1 is composed of at least 11 different subunits. [4Fe-4S] cluster serves as cofactor.

It localises to the cellular thylakoid membrane. The enzyme catalyses a plastoquinone + NADH + (n+1) H(+)(in) = a plastoquinol + NAD(+) + n H(+)(out). It carries out the reaction a plastoquinone + NADPH + (n+1) H(+)(in) = a plastoquinol + NADP(+) + n H(+)(out). NDH-1 shuttles electrons from an unknown electron donor, via FMN and iron-sulfur (Fe-S) centers, to quinones in the respiratory and/or the photosynthetic chain. The immediate electron acceptor for the enzyme in this species is believed to be plastoquinone. Couples the redox reaction to proton translocation, and thus conserves the redox energy in a proton gradient. In Prochlorococcus marinus (strain NATL2A), this protein is NAD(P)H-quinone oxidoreductase subunit I.